The sequence spans 297 residues: 2-phospho-L-lactate transferase (297 aa).

7,8-didemethyl-8-hydroxy-5-deazariboflavin is bound at residue aspartate 49.

Belongs to the CofD family. Homodimer. Requires Mg(2+) as cofactor.

It catalyses the reaction (2S)-lactyl-2-diphospho-5'-guanosine + 7,8-didemethyl-8-hydroxy-5-deazariboflavin = oxidized coenzyme F420-0 + GMP + H(+). It functions in the pathway cofactor biosynthesis; coenzyme F420 biosynthesis. Catalyzes the transfer of the 2-phospholactate moiety from (2S)-lactyl-2-diphospho-5'-guanosine to 7,8-didemethyl-8-hydroxy-5-deazariboflavin (FO) with the formation of oxidized coenzyme F420-0 and GMP. This Methanospirillum hungatei JF-1 (strain ATCC 27890 / DSM 864 / NBRC 100397 / JF-1) protein is 2-phospho-L-lactate transferase.